Consider the following 100-residue polypeptide: Urease subunit gamma (100 aa).

This sequence belongs to the urease gamma subunit family. As to quaternary structure, heterotrimer of UreA (gamma), UreB (beta) and UreC (alpha) subunits. Three heterotrimers associate to form the active enzyme.

It localises to the cytoplasm. It carries out the reaction urea + 2 H2O + H(+) = hydrogencarbonate + 2 NH4(+). It participates in nitrogen metabolism; urea degradation; CO(2) and NH(3) from urea (urease route): step 1/1. The sequence is that of Urease subunit gamma from Rhodopseudomonas palustris (strain BisB18).